The following is a 101-amino-acid chain: NAD(P)H-quinone oxidoreductase subunit 4L, chloroplastic (101 aa).

Transmembrane regions (helical) follow at residues 2 to 22, 32 to 52, and 61 to 81; these read MLEYVLGLSAYLFSIGIYGLI, MCLELILNAVNINFVTFSDFF, and IFSIFVISIAAAEAAIGPAIV.

This sequence belongs to the complex I subunit 4L family. NDH is composed of at least 16 different subunits, 5 of which are encoded in the nucleus.

Its subcellular location is the plastid. It localises to the chloroplast thylakoid membrane. It carries out the reaction a plastoquinone + NADH + (n+1) H(+)(in) = a plastoquinol + NAD(+) + n H(+)(out). The enzyme catalyses a plastoquinone + NADPH + (n+1) H(+)(in) = a plastoquinol + NADP(+) + n H(+)(out). NDH shuttles electrons from NAD(P)H:plastoquinone, via FMN and iron-sulfur (Fe-S) centers, to quinones in the photosynthetic chain and possibly in a chloroplast respiratory chain. The immediate electron acceptor for the enzyme in this species is believed to be plastoquinone. Couples the redox reaction to proton translocation, and thus conserves the redox energy in a proton gradient. This Populus trichocarpa (Western balsam poplar) protein is NAD(P)H-quinone oxidoreductase subunit 4L, chloroplastic.